We begin with the raw amino-acid sequence, 205 residues long: Imidazole glycerol phosphate synthase subunit HisH (205 aa).

A Glutamine amidotransferase type-1 domain is found at 3-205 (KIGLIDYGMG…LLRRWLSNIQ (203 aa)). Cysteine 81 serves as the catalytic Nucleophile. Active-site residues include histidine 185 and glutamate 187.

As to quaternary structure, heterodimer of HisH and HisF.

Its subcellular location is the cytoplasm. It carries out the reaction 5-[(5-phospho-1-deoxy-D-ribulos-1-ylimino)methylamino]-1-(5-phospho-beta-D-ribosyl)imidazole-4-carboxamide + L-glutamine = D-erythro-1-(imidazol-4-yl)glycerol 3-phosphate + 5-amino-1-(5-phospho-beta-D-ribosyl)imidazole-4-carboxamide + L-glutamate + H(+). The enzyme catalyses L-glutamine + H2O = L-glutamate + NH4(+). Its pathway is amino-acid biosynthesis; L-histidine biosynthesis; L-histidine from 5-phospho-alpha-D-ribose 1-diphosphate: step 5/9. Its function is as follows. IGPS catalyzes the conversion of PRFAR and glutamine to IGP, AICAR and glutamate. The HisH subunit catalyzes the hydrolysis of glutamine to glutamate and ammonia as part of the synthesis of IGP and AICAR. The resulting ammonia molecule is channeled to the active site of HisF. The protein is Imidazole glycerol phosphate synthase subunit HisH of Prochlorococcus marinus (strain MIT 9312).